The primary structure comprises 161 residues: 6,7-dimethyl-8-ribityllumazine synthase (161 aa).

Residues Trp31, 63–65 (SFE), and 85–87 (VVI) each bind 5-amino-6-(D-ribitylamino)uracil. 90 to 91 (GT) is a (2S)-2-hydroxy-3-oxobutyl phosphate binding site. Catalysis depends on His93, which acts as the Proton donor. Residue Phe118 coordinates 5-amino-6-(D-ribitylamino)uracil. Arg132 contributes to the (2S)-2-hydroxy-3-oxobutyl phosphate binding site.

It belongs to the DMRL synthase family.

The enzyme catalyses (2S)-2-hydroxy-3-oxobutyl phosphate + 5-amino-6-(D-ribitylamino)uracil = 6,7-dimethyl-8-(1-D-ribityl)lumazine + phosphate + 2 H2O + H(+). The protein operates within cofactor biosynthesis; riboflavin biosynthesis; riboflavin from 2-hydroxy-3-oxobutyl phosphate and 5-amino-6-(D-ribitylamino)uracil: step 1/2. Catalyzes the formation of 6,7-dimethyl-8-ribityllumazine by condensation of 5-amino-6-(D-ribitylamino)uracil with 3,4-dihydroxy-2-butanone 4-phosphate. This is the penultimate step in the biosynthesis of riboflavin. In Paenarthrobacter aurescens (strain TC1), this protein is 6,7-dimethyl-8-ribityllumazine synthase.